The following is a 1170-amino-acid chain: DNA excision repair protein ERCC-5 (1170 aa).

Positions 1–78 (MGVQGLWKLL…RIRPIFVFDG (78 aa)) are N-domain. N6-acetyllysine is present on Lys-8. Residue Asp-30 coordinates Mg(2+). Positions 31 to 67 (ISIWLNQALKGVRDSHGNVIENAHLLTLFHRLCKLLF) are DNA-binding; may bind to the undamaged single-strand DNA of the DNA repair bubble. Asp-77 is a Mg(2+) binding site. Residues 79 to 784 (DAPLLKKQTL…LRLFGVPYIQ (706 aa)) form a spacer region region. 3 disordered regions span residues 304–479 (DSES…RCDT), 520–587 (HVSG…PKAC), and 600–701 (LENA…ECLL). Residues 306–323 (ESLPSSSNVHSVSSNLKS) show a composition bias toward low complexity. 2 stretches are compositionally biased toward basic and acidic residues: residues 324–336 (SPHE…REPE) and 363–373 (SREGRQSKERN). Position 384 is a phosphoserine (Ser-384). Positions 455-474 (TSGSSANGQTDSAHSFTTAS) are enriched in polar residues. Residues 539-551 (THSDQGIDIHPED) show a composition bias toward basic and acidic residues. The segment covering 659 to 676 (SVVSNSELQTESSEASTH) has biased composition (polar residues). A compositionally biased stretch (basic and acidic residues) spans 677–698 (LSEKDAEEPRETLEEGTSRDTE). Phosphoserine occurs at positions 704 and 705. Positions 785 to 880 (APMEAEAQCA…VTAMEILNEF (96 aa)) are I-domain. Residues Glu-788, Glu-790, Asp-809, and Asp-811 each coordinate Mg(2+). Residues 819–835 (HVYKNFFNKNKFVEYYQ) are DNA-binding; may bind to the undamaged single-strand DNA of the DNA repair bubble. The DNA-binding; H2TH (helix-2turn-helix) motif which binds double-stranded DNA stretch occupies residues 847–879 (RNKLINLAYLLGSDYTEGIPTVGCVTAMEILNE). Asp-860 is a binding site for Mg(2+). The tract at residues 911–917 (TKVKKKL) is DNA-binding; may bind double-stranded DNA. Positions 980–1008 (LKHLNAHQTQLRIDSFFRLAQQEKQDAKL) are interaction with PCNA. The segment at 1010–1170 (KSHRLNRAVT…KSMKRRKKKT (161 aa)) is interaction with ERCC6/CSB. Positions 1033–1146 (LTKVTEALDD…DDEDKAKTVL (114 aa)) are disordered. Basic and acidic residues predominate over residues 1041-1060 (DDAKGKTQKRELPYKKETSV). The Nuclear localization signal 1 motif lies at 1049–1065 (KRELPYKKETSVPKRRR). Residues 1094-1110 (SVMSARQRSAAESSKIS) show a composition bias toward polar residues. The Nuclear localization signal 2 signature appears at 1153-1170 (FGKKKLKLKSMKRRKKKT).

The protein belongs to the XPG/RAD2 endonuclease family. XPG subfamily. In terms of assembly, monomer. Homodimer. Component of the homologous recombination repair (HR) complex composed of ERCC5/XPG, BRCA2, PALB2, DSS1 and RAD51. Within the complex, interacts with BRCA2 and PALB2. Interacts with RNA polymerase II. Interacts (via C-terminus) with ERCC6/CSB; the interaction stimulates ERCC6/CSB binding to the DNA repair bubble and ERCC6/CSB ATPase activity. May form a complex composed of RNA polymerase II, ERCC6/CSB and ERCC5/XPG which associates with the DNA repair bubble during transcription-coupled nucleotide excision repair. Interacts with BRCA1; the interaction promotes the release of BRCA1 from DNA. Interacts with PCNA. Interacts with NTHL1; the interaction stimulates NTHL1 activity and NTHL1 binding to its DNA substrate. It depends on Mg(2+) as a cofactor.

The protein resides in the nucleus. It localises to the chromosome. Functionally, single-stranded structure-specific DNA endonuclease involved in DNA excision repair. Makes the 3'incision in DNA nucleotide excision repair (NER). Binds and bends DNA repair bubble substrate and breaks base stacking at the single-strand/double-strand DNA junction of the DNA bubble. Plays a role in base excision repair (BER) by promoting the binding of DNA glycosylase NTHL1 to its substrate and increasing NTHL1 catalytic activity that removes oxidized pyrimidines from DNA. Involved in transcription-coupled nucleotide excision repair (TCR) which allows RNA polymerase II-blocking lesions to be rapidly removed from the transcribed strand of active genes. Functions during the initial step of TCR in cooperation with ERCC6/CSB to recognized stalled RNA polymerase II. Also, stimulates ERCC6/CSB binding to the DNA repair bubble and ERCC6/CSB ATPase activity. Required for DNA replication fork maintenance and preservation of genomic stability. Involved in homologous recombination repair (HRR) induced by DNA replication stress by recruiting RAD51, BRCA2, and PALB2 to the damaged DNA site. During HRR, binds to the replication fork with high specificity and stabilizes it. Also, acts upstream of HRR, to promote the release of BRCA1 from DNA. In Mus musculus (Mouse), this protein is DNA excision repair protein ERCC-5 (Ercc5).